The primary structure comprises 178 residues: Protein GrpE (178 aa).

A compositionally biased stretch (pro residues) spans 1-11 (MSENQNPPPSP). The segment at 1–23 (MSENQNPPPSPEEIEAAMSANAA) is disordered.

It belongs to the GrpE family. Homodimer.

It is found in the cytoplasm. Participates actively in the response to hyperosmotic and heat shock by preventing the aggregation of stress-denatured proteins, in association with DnaK and GrpE. It is the nucleotide exchange factor for DnaK and may function as a thermosensor. Unfolded proteins bind initially to DnaJ; upon interaction with the DnaJ-bound protein, DnaK hydrolyzes its bound ATP, resulting in the formation of a stable complex. GrpE releases ADP from DnaK; ATP binding to DnaK triggers the release of the substrate protein, thus completing the reaction cycle. Several rounds of ATP-dependent interactions between DnaJ, DnaK and GrpE are required for fully efficient folding. The polypeptide is Protein GrpE (Acidovorax sp. (strain JS42)).